The chain runs to 107 residues: uncharacterized protein (107 aa).

This is an uncharacterized protein from Acidianus bottle-shaped virus (isolate Italy/Pozzuoli) (ABV).